A 1588-amino-acid polypeptide reads, in one-letter code: uncharacterized protein (1588 aa).

Over residues 486–495 the composition is skewed to basic and acidic residues; the sequence is RKRLTSKTED. Disordered regions lie at residues 486-515 and 1146-1176; these read RKRL…KRRP and GGQD…RELN. Polar residues predominate over residues 498–507; that stretch reads NQWTRDCQNS. The segment covering 1150-1169 has biased composition (low complexity); the sequence is NVSDQSENQSENQSLESETS.

The protein localises to the virion. This is an uncharacterized protein from Acanthamoeba polyphaga (Amoeba).